The chain runs to 74 residues: Protein SMIM7 homolog (74 aa).

A helical membrane pass occupies residues 53–73; sequence FRAFIGLWNIFIMFLMLVFFG.

This sequence belongs to the SMIM7 family.

The protein localises to the membrane. The protein is Protein SMIM7 homolog of Ixodes scapularis (Black-legged tick).